Here is a 463-residue protein sequence, read N- to C-terminus: ATP synthase subunit beta (463 aa).

151 to 158 (GGAGVGKT) provides a ligand contact to ATP.

The protein belongs to the ATPase alpha/beta chains family. In terms of assembly, F-type ATPases have 2 components, CF(1) - the catalytic core - and CF(0) - the membrane proton channel. CF(1) has five subunits: alpha(3), beta(3), gamma(1), delta(1), epsilon(1). CF(0) has three main subunits: a(1), b(2) and c(9-12). The alpha and beta chains form an alternating ring which encloses part of the gamma chain. CF(1) is attached to CF(0) by a central stalk formed by the gamma and epsilon chains, while a peripheral stalk is formed by the delta and b chains.

It localises to the cell membrane. The enzyme catalyses ATP + H2O + 4 H(+)(in) = ADP + phosphate + 5 H(+)(out). Functionally, produces ATP from ADP in the presence of a proton gradient across the membrane. The catalytic sites are hosted primarily by the beta subunits. This Clostridium botulinum (strain ATCC 19397 / Type A) protein is ATP synthase subunit beta.